A 148-amino-acid chain; its full sequence is FAD synthase (148 aa).

ATP is bound by residues 11–12, 16–19, Asn-94, and Tyr-121; these read TF and HPGH.

It belongs to the archaeal FAD synthase family. In terms of assembly, homodimer. The cofactor is a divalent metal cation.

It catalyses the reaction FMN + ATP + H(+) = FAD + diphosphate. It participates in cofactor biosynthesis; FAD biosynthesis; FAD from FMN: step 1/1. Functionally, catalyzes the transfer of the AMP portion of ATP to flavin mononucleotide (FMN) to produce flavin adenine dinucleotide (FAD) coenzyme. The sequence is that of FAD synthase from Methanoregula boonei (strain DSM 21154 / JCM 14090 / 6A8).